Consider the following 335-residue polypeptide: Glyceraldehyde-3-phosphate dehydrogenase (335 aa).

Residues 13–14 (TI) and Gly-111 contribute to the NAD(+) site. 140 to 142 (SCN) lines the D-glyceraldehyde 3-phosphate pocket. The active-site Nucleophile is Cys-141. Residue Arg-169 coordinates NAD(+). D-glyceraldehyde 3-phosphate is bound by residues Thr-171 and 195–196 (HG). Gln-300 lines the NAD(+) pocket.

Belongs to the glyceraldehyde-3-phosphate dehydrogenase family. Homotetramer.

It is found in the cytoplasm. The enzyme catalyses D-glyceraldehyde 3-phosphate + phosphate + NADP(+) = (2R)-3-phospho-glyceroyl phosphate + NADPH + H(+). The catalysed reaction is D-glyceraldehyde 3-phosphate + phosphate + NAD(+) = (2R)-3-phospho-glyceroyl phosphate + NADH + H(+). Its pathway is carbohydrate degradation; glycolysis; pyruvate from D-glyceraldehyde 3-phosphate: step 1/5. This chain is Glyceraldehyde-3-phosphate dehydrogenase, found in Methanosarcina mazei (strain ATCC BAA-159 / DSM 3647 / Goe1 / Go1 / JCM 11833 / OCM 88) (Methanosarcina frisia).